Consider the following 453-residue polypeptide: MLKRKVRYLLLIVVVFTGIILSVEAIMRFQLNKNVDYYLKFFDKHKDNIENMYDPLNIKQIPYSTIDQLYTKRQSEAEPIDWDKFAYVNYITDFEYLCNTLIQFRKLNDSGSKAKLLALVTDTLVNKSKENKEVEALLNKIKSVSDRVAVTEVGSVIQPNDHTPWSKSLTKLAIFNLTDYERIIYMDNDAIIHDKMDELFFLPSYVKFAAPISYWFVTADDLRTVSTDTKKLFKTNKLDPIEKKLASRVKNSLEIYNHLPNLPQHFYSKSMNFIIDIDGFQKSDNKVNFATHLMVIKPDVTMANDIRDNILPRYLKAKEEYDTDLINEELYNFKELIYYQFKIFRKIQYLFKPSVLILPYTKYGLLTKSIDDKRQKDLLKNAILGYERKEKDDLIQDAKFIHFSDYPLSKPWFYSNADDIQCSKKYSISDENCQLWKSLYKEYLESRAICQVN.

Residues 1 to 8 (MLKRKVRY) lie on the Cytoplasmic side of the membrane. Residues 9-29 (LLLIVVVFTGIILSVEAIMRF) form a helical; Signal-anchor for type II membrane protein membrane-spanning segment. Over 30–453 (QLNKNVDYYL…LESRAICQVN (424 aa)) the chain is Lumenal. N-linked (GlcNAc...) asparagine glycans are attached at residues Asn108, Asn126, and Asn176. The DXD motif lies at 187–189 (DND).

Belongs to the GNT1 family.

It localises to the golgi apparatus membrane. It is found in the vacuole membrane. Its function is as follows. N-acetylglucosaminyltransferase involved in the Golgi-specific modification of N-linked glycans. The polypeptide is Glucose N-acetyltransferase 1-B (GNT1-B) (Kluyveromyces lactis (strain ATCC 8585 / CBS 2359 / DSM 70799 / NBRC 1267 / NRRL Y-1140 / WM37) (Yeast)).